The following is a 393-amino-acid chain: Interferon regulatory factor 9 (393 aa).

The IRF tryptophan pentad repeat DNA-binding region spans 9 to 116 (TRKLRNWVVE…EPYKVYQLLP (108 aa)). Disordered regions lie at residues 120–151 (VSGQ…AMQN) and 163–202 (LNNE…APFQ). Ser-139 carries the post-translational modification Phosphoserine.

Belongs to the IRF family. As to quaternary structure, interacts with STAT2 in the cytoplasm. Forms the interferon-stimulated gene factor 3 complex (ISGF3) with the heterodimer STAT1:STAT2; upon stimulation. (Microbial infection) Interacts with measles virus V protein; this interaction prevents the binding of IRF9 to STAT2 and thereby the type I interferon signaling pathway. In terms of processing, (Microbial infection) Ubiquitinated by Herpes simplex virus 2 E3 ubiquitin ligase ICP22.

The protein localises to the cytoplasm. It is found in the nucleus. Its function is as follows. Transcription factor that plays an essential role in anti-viral immunity. It mediates signaling by type I IFNs (IFN-alpha and IFN-beta). Following type I IFN binding to cell surface receptors, Jak kinases (TYK2 and JAK1) are activated, leading to tyrosine phosphorylation of STAT1 and STAT2. IRF9/ISGF3G associates with the phosphorylated STAT1:STAT2 dimer to form a complex termed ISGF3 transcription factor, that enters the nucleus. ISGF3 binds to the IFN stimulated response element (ISRE) to activate the transcription of interferon stimulated genes, which drive the cell in an antiviral state. The protein is Interferon regulatory factor 9 (IRF9) of Homo sapiens (Human).